Consider the following 287-residue polypeptide: Polyamine aminopropyltransferase (287 aa).

The PABS domain maps to 5-238; sequence ETWHETLHDH…GIMTFAWASQ (234 aa). Gln33 is an S-methyl-5'-thioadenosine binding site. The spermidine site is built by His64 and Asp88. S-methyl-5'-thioadenosine contacts are provided by residues Glu108 and 140-141; that span reads DG. Asp158 functions as the Proton acceptor in the catalytic mechanism. 158 to 161 provides a ligand contact to spermidine; sequence DCTD. Position 165 (Pro165) interacts with S-methyl-5'-thioadenosine.

It belongs to the spermidine/spermine synthase family. In terms of assembly, homodimer or homotetramer.

The protein resides in the cytoplasm. The catalysed reaction is S-adenosyl 3-(methylsulfanyl)propylamine + putrescine = S-methyl-5'-thioadenosine + spermidine + H(+). It participates in amine and polyamine biosynthesis; spermidine biosynthesis; spermidine from putrescine: step 1/1. Its function is as follows. Catalyzes the irreversible transfer of a propylamine group from the amino donor S-adenosylmethioninamine (decarboxy-AdoMet) to putrescine (1,4-diaminobutane) to yield spermidine. In Sodalis glossinidius (strain morsitans), this protein is Polyamine aminopropyltransferase.